The sequence spans 234 residues: Probable septum site-determining protein MinC (234 aa).

This sequence belongs to the MinC family. In terms of assembly, interacts with MinD and FtsZ.

Cell division inhibitor that blocks the formation of polar Z ring septums. Rapidly oscillates between the poles of the cell to destabilize FtsZ filaments that have formed before they mature into polar Z rings. Prevents FtsZ polymerization. The protein is Probable septum site-determining protein MinC of Buchnera aphidicola subsp. Baizongia pistaciae (strain Bp).